The chain runs to 435 residues: Xylose isomerase (435 aa).

Active-site residues include histidine 99 and aspartate 102. Mg(2+) is bound by residues glutamate 230, glutamate 266, histidine 269, aspartate 294, aspartate 305, aspartate 307, and aspartate 337.

Belongs to the xylose isomerase family. As to quaternary structure, homotetramer. Requires Mg(2+) as cofactor.

The protein localises to the cytoplasm. It carries out the reaction alpha-D-xylose = alpha-D-xylulofuranose. This Tetragenococcus halophilus (Pediococcus halophilus) protein is Xylose isomerase (xylA).